The following is a 216-amino-acid chain: NKG2-D type II integral membrane protein (216 aa).

Over 1–51 (MGWIRGRRPRHNLEMSEFHNYKLGLAKSDFSTRCQKQRCPVIKSKCRENAS) the chain is Cytoplasmic. A helical; Signal-anchor for type II membrane protein transmembrane segment spans residues 52 to 72 (PLFFCCFIAVAMGIRFIIMVT). Over 73 to 216 (IWSAVFLNSL…NTYICMQRTV (144 aa)) the chain is Extracellular. Cystine bridges form between Cys-96/Cys-105 and Cys-99/Cys-110. The C-type lectin domain maps to 98–213 (PCPKNWICYK…SIPNTYICMQ (116 aa)). Residues Asn-115, Asn-131, Asn-163, and Asn-202 are each glycosylated (N-linked (GlcNAc...) asparagine). Cystine bridges form between Cys-127/Cys-211 and Cys-189/Cys-203.

In terms of assembly, homodimer; disulfide-linked. Heterohexamer composed of two subunits of KLRK1 and four subunits of HCST/DAP10. Interacts (via transmembrane domain) with HCST/DAP10 (via transmembrane domain); the interaction is required for KLRK1 NK cell surface and induces NK cell-mediated cytotoxicity. Can form disulfide-bonded heterodimer with CD94. Interacts with CEACAM1; recruits PTPN6 that dephosphorylates VAV1. As to expression, natural killer cells.

It localises to the cell membrane. Its function is as follows. Functions as an activating and costimulatory receptor involved in immunosurveillance upon binding to various cellular stress-inducible ligands displayed at the surface of autologous tumor cells and virus-infected cells. Provides both stimulatory and costimulatory innate immune responses on activated killer (NK) cells, leading to cytotoxic activity. Acts as a costimulatory receptor for T-cell receptor (TCR) in CD8(+) T-cell-mediated adaptive immune responses by amplifying T-cell activation. Stimulates perforin-mediated elimination of ligand-expressing tumor cells. Signaling involves calcium influx, culminating in the expression of TNF-alpha. Participates in NK cell-mediated bone marrow graft rejection. May play a regulatory role in differentiation and survival of NK cells. Binds to ligands belonging to various subfamilies of MHC class I-related glycoproteins. The sequence is that of NKG2-D type II integral membrane protein (KLRK1) from Macaca fascicularis (Crab-eating macaque).